Consider the following 624-residue polypeptide: Outer dynein arm-docking complex subunit 4 (624 aa).

8 TPR repeats span residues 11-44, 46-78, 79-112, 273-309, 318-351, 358-391, 395-428, and 435-468; these read FPSYMAEGERLYLCGEFTKAIQSFTNALHLQSGD, NCLVARSKCYLKMGDLEKSLNDAEASLRNDPTF, CKGILQKAETLYTMGDFEFALVFYHRGYKLRPDR, LKSLEDIDMLLTSGSADGSLQKAEKVLKKVLEWNQEE, GNLYSCIGNAQIELGQMVAALQSHRKDLEIAKEH, SRALDNIGRVFARVGKFQQAIDTWEEKIPLAKTT, TWLFHEIGRCYLELDQAWQAQSYGEKSQQYAEEE, and LNASVLVAQAQVKLRDFESAVNNFEKALERAKLV. The segment at 511–624 is disordered; the sequence is MSQMDLQGAS…VQKLEKTKEE (114 aa). 3 stretches are compositionally biased toward basic and acidic residues: residues 520-557, 576-588, and 595-624; these read SEKEPLRGREEQERVVKQWERDQESEREATDDEQDRKS, IRRESREIYRRLS, and PSEDGSQKQEKKQAEAAKGEVQKLEKTKEE.

In terms of assembly, component of the outer dynein arm-docking complex along with ODAD1, ODAD2, and ODAD3. Interacts with ODAD1; this interaction may facilitate the recruitment and/or attachment of outer dynein arm docking complex proteins, including ODAD1, ODAD3 and ODAD2, to ciliary axonemes. Interacts with components of the IFT complex A, including IFT140, TTC21B/IFT139 and WDR19/IFT144, and the IFT complex B, including IFT46, IFT52 and IFT57. Interacts with CFAP53.

Its subcellular location is the cell projection. The protein resides in the cilium. The protein localises to the cytoplasm. It is found in the cytoskeleton. It localises to the cilium axoneme. Component of the outer dynein arm-docking complex (ODA-DC) that mediates outer dynein arms (ODA) binding onto the doublet microtubule. Plays an essential role for the assembly of ODA-DC and for the docking of ODA in ciliary axoneme. In Mus musculus (Mouse), this protein is Outer dynein arm-docking complex subunit 4 (Odad4).